The sequence spans 135 residues: Serine protease inhibitor swm-1 (135 aa).

The first 16 residues, 1–16, serve as a signal peptide directing secretion; that stretch reads MRILVIITCIVAVATA. Intrachain disulfides connect Cys-20–Cys-53, Cys-29–Cys-48, Cys-33–Cys-44, Cys-37–Cys-73, Cys-55–Cys-67, Cys-80–Cys-114, Cys-89–Cys-109, Cys-93–Cys-105, Cys-97–Cys-133, and Cys-116–Cys-127. TIL domains lie at 20–73 and 80–133; these read CEAN…VSEC and CPEN…KKDC. Residue Asn-83 is glycosylated (N-linked (GlcNAc...) asparagine).

In terms of tissue distribution, in male, expressed in the vas deferens cuboidal cells and, in posterior body wall and male-specific diagonal muscles. In hermaphrodites, expressed in posterior body wall muscles and spermatheca.

It localises to the secreted. The protein localises to the cytoplasmic vesicle. The protein resides in the secretory vesicle lumen. Its function is as follows. Serine protease inhibitor. Probably by inhibiting serine protease tyr-5 in males, prevents the maturation of spermatids into mature motile spermatozoa until their transfer into a hermaphrodite. Also required for efficient sperm transfer and thus for male fertility. The sequence is that of Serine protease inhibitor swm-1 from Caenorhabditis elegans.